The primary structure comprises 424 residues: Double homeobox protein 4-like protein 2 (424 aa).

Residues 1–10 are compositionally biased toward polar residues; it reads MALPTPSDST. Disordered regions lie at residues 1 to 24, 72 to 102, 148 to 167, 218 to 362, and 388 to 414; these read MALPTPSDSTLPAEARGRGRRRRL, SRQLRQHRRESRPWPGRRGPPEGRRKRTAVT, RHPGQGGRAPAQAGGLCSAA, LQPS…LQEP, and QPLLETEAPGELEASEEAASLEAPLSE. 2 DNA-binding regions (homeobox) span residues 19–78 and 94–153; these read GRRR…LRQH and GRRK…PGQG. Residues 265–274 show a composition bias toward basic and acidic residues; the sequence is KSREDRDPQR. Composition is skewed to low complexity over residues 278–302 and 319–329; these read PGPCAVAQPGPAQAGPQGQGVLAPP and AGAAWEPQAGA.

It localises to the nucleus. Its function is as follows. May be involved in transcriptional regulation. This chain is Double homeobox protein 4-like protein 2 (DUX4L2), found in Homo sapiens (Human).